The chain runs to 342 residues: Isopentenyl-diphosphate delta-isomerase (342 aa).

Residue Arg11 to Lys12 participates in substrate binding. Residues Ser68, Ser69–Thr71, Ser99, and Asn127 each bind FMN. Substrate is bound at residue Ser99 to Arg101. Mg(2+) is bound at residue Glu163. Residues Lys194, Thr224, and Ala295–Gly296 each bind FMN.

This sequence belongs to the IPP isomerase type 2 family. As to quaternary structure, homooctamer. Dimer of tetramers. The cofactor is FMN. NADPH is required as a cofactor. Mg(2+) serves as cofactor.

The protein localises to the cytoplasm. The catalysed reaction is isopentenyl diphosphate = dimethylallyl diphosphate. Its function is as follows. Involved in the biosynthesis of isoprenoids. Catalyzes the 1,3-allylic rearrangement of the homoallylic substrate isopentenyl (IPP) to its allylic isomer, dimethylallyl diphosphate (DMAPP). This chain is Isopentenyl-diphosphate delta-isomerase, found in Rickettsia prowazekii (strain Madrid E).